The following is a 242-amino-acid chain: NAD-dependent protein deacetylase 1 (242 aa).

One can recognise a Deacetylase sirtuin-type domain in the interval 1–242; the sequence is MTITSWLAAS…LNEQLAEVDP (242 aa). Residues A19, T23, F30, R31, Q97, V99, D100, and H115 each contribute to the NAD(+) site. Nicotinamide is bound at residue F30. Residues V99 and D100 each coordinate nicotinamide. H115 functions as the Proton acceptor in the catalytic mechanism. Residues C123, C126, C142, and C144 each contribute to the Zn(2+) site. 4 residues coordinate NAD(+): S182, S183, N207, and I226.

This sequence belongs to the sirtuin family. Class U subfamily. The cofactor is Zn(2+).

It is found in the cytoplasm. The catalysed reaction is N(6)-acetyl-L-lysyl-[protein] + NAD(+) + H2O = 2''-O-acetyl-ADP-D-ribose + nicotinamide + L-lysyl-[protein]. Functionally, NAD-dependent protein deacetylase which modulates the activities of several enzymes which are inactive in their acetylated form. This Geobacillus kaustophilus (strain HTA426) protein is NAD-dependent protein deacetylase 1.